The primary structure comprises 76 residues: Conotoxin MaIr332 (76 aa).

The first 21 residues, 1–21 (MKLTCVIVAVLFLTAWTFVTA), serve as a signal peptide directing secretion. Residues 22–48 (DDSGNGLENLFSKAHHEMKNPKDSKLN) constitute a propeptide that is removed on maturation. 3 cysteine pairs are disulfide-bonded: cysteine 51–cysteine 66, cysteine 58–cysteine 70, and cysteine 65–cysteine 75.

The protein belongs to the conotoxin O1 superfamily. As to expression, expressed by the venom duct.

It localises to the secreted. The polypeptide is Conotoxin MaIr332 (Conus marmoreus (Marble cone)).